The chain runs to 264 residues: Intermembrane phospholipid transport system ATP-binding protein MlaF (264 aa).

In terms of domain architecture, ABC transporter spans 6–242 (IEVKNLTFKR…QDLRVVQFLK (237 aa)). An ATP-binding site is contributed by 38–45 (GPSGIGKT).

The protein belongs to the ABC transporter superfamily. MlaF family. In terms of assembly, the complex is composed of two ATP-binding proteins (MlaF), two transmembrane proteins (MlaE), two cytoplasmic solute-binding proteins (MlaB) and six periplasmic solute-binding proteins (MlaD).

The protein resides in the cell inner membrane. Its function is as follows. Part of the ABC transporter complex MlaFEDB, which is involved in a phospholipid transport pathway that maintains lipid asymmetry in the outer membrane by retrograde trafficking of phospholipids from the outer membrane to the inner membrane. Responsible for energy coupling to the transport system. The protein is Intermembrane phospholipid transport system ATP-binding protein MlaF of Haemophilus influenzae (strain ATCC 51907 / DSM 11121 / KW20 / Rd).